Here is a 343-residue protein sequence, read N- to C-terminus: Tetraacyldisaccharide 4'-kinase (343 aa).

His51 to Thr58 serves as a coordination point for ATP.

It belongs to the LpxK family.

It carries out the reaction a lipid A disaccharide + ATP = a lipid IVA + ADP + H(+). It functions in the pathway glycolipid biosynthesis; lipid IV(A) biosynthesis; lipid IV(A) from (3R)-3-hydroxytetradecanoyl-[acyl-carrier-protein] and UDP-N-acetyl-alpha-D-glucosamine: step 6/6. Its function is as follows. Transfers the gamma-phosphate of ATP to the 4'-position of a tetraacyldisaccharide 1-phosphate intermediate (termed DS-1-P) to form tetraacyldisaccharide 1,4'-bis-phosphate (lipid IVA). The protein is Tetraacyldisaccharide 4'-kinase of Rhodopseudomonas palustris (strain BisB18).